Reading from the N-terminus, the 447-residue chain is Serine/threonine-protein kinase NLK2 (447 aa).

Residues 60–349 form the Protein kinase domain; it reads PEPDRPIGYG…AKDALAHPYL (290 aa). Residues 66–74 and K89 each bind ATP; that span reads IGYGAFGVV. D186 (proton acceptor) is an active-site residue.

Belongs to the protein kinase superfamily. CMGC Ser/Thr protein kinase family. MAP kinase subfamily. In terms of assembly, interacts with sox11, hmgxb4/hmg2l1, rnf138/narf, stat3.1 and mef2a. Requires Mg(2+) as cofactor. Expressed widely in the ectoderm during early gastrula stage when neural induction is taking place. Expressed in the head region of neurula stage embryos. At the end of neurulation, expression becomes localized to the nervous system, and is restricted to the central nervous system, eye and head neural crest cells by the early tadpole stages.

The protein localises to the nucleus. The protein resides in the cytoplasm. The catalysed reaction is L-seryl-[protein] + ATP = O-phospho-L-seryl-[protein] + ADP + H(+). The enzyme catalyses L-threonyl-[protein] + ATP = O-phospho-L-threonyl-[protein] + ADP + H(+). With respect to regulation, activated by tyrosine and threonine phosphorylation. Functionally, negatively regulates Wnt/beta-catenin-signaling during development. Plays a role together with sox11 in neural induction during early embryogenesis. Involved in TGFbeta-mediated mesoderm induction in early embryos, acting downstream of map3k7/tak1 to phosphorylate stat3.1. Augments the rnf138/narf-directed ubiquitination and degradation of tcf/lef by enhancing the association of rnf138/narf and tcf/lef. Phosphorylates mef2a to play a role in anterior neural development, including eye formation. In Xenopus laevis (African clawed frog), this protein is Serine/threonine-protein kinase NLK2 (nlk.2).